We begin with the raw amino-acid sequence, 820 residues long: Catenin beta (820 aa).

The segment covering 1 to 16 (MEQARYSNQQSVNPQQ) has biased composition (polar residues). Residues 1–74 (MEQARYSNQQ…SRHEDGGEEA (74 aa)) form a disordered region. Over residues 52–63 (SSATSHPPSVSS) the composition is skewed to low complexity. ARM repeat units lie at residues 157–196 (NYQDDADLATRAIPELTKLLNDDDLVVVNQAAMMVHQLSK), 199–239 (ASRH…NLSH), 241–280 (RAGLLQIFKSGGIPALIKLLSSPVESVLFYAITTLHNLLL), 283–322 (EGSKMAVRLAGGLQKMVALLSRNNPKFLAITTDCLQILAY), 367–405 (HNNKPAIVEAGGMSALGLHLGHHSNRLVQNCLWTLRNLS), 406–445 (DCHRGTDDIEPLLQMLVQLLASNDINVVTCACGILSNLTC), 448–489 (SRNK…HVTS), 495–535 (EMGQ…NLAL), 603–642 (SHNRALIQGLNCIPLFVQLLYNNIENIQRVAAGVLSELSL), and 644–683 (KQGAEMIEQEGATAPLTELLHSRNEGVATYAAAVLYRMSD). The segment at 708-811 (PWGDPLDMPS…LDSIPPADNT (104 aa)) is disordered. Over residues 785–796 (GMDPGLPDMGPP) the composition is skewed to low complexity.

The protein belongs to the beta-catenin family.

The protein resides in the cytoplasm. It localises to the cytoskeleton. In terms of biological role, binds to the cytoplasmic domain of the cell-cell adhesion molecule E-cadherin, and perhaps to other (membrane) proteins. The association of catenins to cadherins produces a complex which is linked to the actin filament network, and which seems to be of primary importance for cadherins cell-adhesion properties. The chain is Catenin beta from Tripneustes gratilla (Hawaian sea urchin).